A 94-amino-acid chain; its full sequence is Small ribosomal subunit protein bS6 (94 aa).

It belongs to the bacterial ribosomal protein bS6 family.

Binds together with bS18 to 16S ribosomal RNA. This chain is Small ribosomal subunit protein bS6, found in Desulforudis audaxviator (strain MP104C).